The sequence spans 445 residues: tRNA-2-methylthio-N(6)-dimethylallyladenosine synthase (445 aa).

One can recognise an MTTase N-terminal domain in the interval 2–119 (KKLYIRTFGC…LPQLIAERRH (118 aa)). [4Fe-4S] cluster contacts are provided by cysteine 11, cysteine 48, cysteine 82, cysteine 156, cysteine 160, and cysteine 163. One can recognise a Radical SAM core domain in the interval 142-378 (RVEGASAFVS…RIDQQAQAIS (237 aa)). The TRAM domain maps to 379–442 (QAMVGRVERA…PHSLRGEIVT (64 aa)).

Belongs to the methylthiotransferase family. MiaB subfamily. In terms of assembly, monomer. Requires [4Fe-4S] cluster as cofactor.

Its subcellular location is the cytoplasm. The enzyme catalyses N(6)-dimethylallyladenosine(37) in tRNA + (sulfur carrier)-SH + AH2 + 2 S-adenosyl-L-methionine = 2-methylsulfanyl-N(6)-dimethylallyladenosine(37) in tRNA + (sulfur carrier)-H + 5'-deoxyadenosine + L-methionine + A + S-adenosyl-L-homocysteine + 2 H(+). Functionally, catalyzes the methylthiolation of N6-(dimethylallyl)adenosine (i(6)A), leading to the formation of 2-methylthio-N6-(dimethylallyl)adenosine (ms(2)i(6)A) at position 37 in tRNAs that read codons beginning with uridine. The sequence is that of tRNA-2-methylthio-N(6)-dimethylallyladenosine synthase from Aromatoleum aromaticum (strain DSM 19018 / LMG 30748 / EbN1) (Azoarcus sp. (strain EbN1)).